The following is a 279-amino-acid chain: Acetylglutamate kinase (279 aa).

Residues 64–65 (GG), R86, and N177 each bind substrate.

This sequence belongs to the acetylglutamate kinase family. ArgB subfamily.

Its subcellular location is the cytoplasm. It carries out the reaction N-acetyl-L-glutamate + ATP = N-acetyl-L-glutamyl 5-phosphate + ADP. The protein operates within amino-acid biosynthesis; L-arginine biosynthesis; N(2)-acetyl-L-ornithine from L-glutamate: step 2/4. Functionally, catalyzes the ATP-dependent phosphorylation of N-acetyl-L-glutamate. This chain is Acetylglutamate kinase, found in Campylobacter jejuni subsp. doylei (strain ATCC BAA-1458 / RM4099 / 269.97).